The primary structure comprises 775 residues: E3 ubiquitin-protein ligase ICP0 (775 aa).

Residues 1–112 are disordered; that stretch reads MEPRPGASTR…PPREDGGSDE (112 aa). 2 stretches are compositionally biased toward basic and acidic residues: residues 10 to 21 and 45 to 57; these read RRPEGRPQREPA and VGGR…HDDD. Residues 58 to 69 show a composition bias toward acidic residues; the sequence is SASEADSTDTEL. A Phosphothreonine; by host; by CK1 modification is found at Thr-67. The RING-type zinc finger occupies 116–157; the sequence is CAVCTDEIAPHLRCDTFPCMHRFCIPCMKTWMQLRNTCPLCN. The segment at 221–636 is disordered; sequence RALSPTHPEP…HAETSGAVPA (416 aa). Acidic residues predominate over residues 231–243; it reads TTDEDDDDLDDAD. The span at 258–284 shows a compositional bias: low complexity; the sequence is RRGAAAPPVTGGASHAAPQPAAARTAP. Residues 293-302 show a composition bias toward polar residues; sequence GSSNTNTTTN. A compositionally biased stretch (low complexity) spans 310-321; the sequence is RQSRAAAPRGAS. Over residues 322–331 the composition is skewed to gly residues; it reads GPSGGVGVGV. Residues 369–390 show a composition bias toward pro residues; the sequence is PASPHRPPAAPMPGSAPRPGPP. A compositionally biased stretch (low complexity) spans 391 to 409; the sequence is ASAAASGPARPRAAVAPCV. Pro residues predominate over residues 410–421; the sequence is RAPPPGPGPRAP. Residues 422–431 are compositionally biased toward low complexity; the sequence is APGAEPAARP. Residues 439 to 453 are compositionally biased toward polar residues; sequence QSHSSLAQAANQEQS. Over residues 464–476 the composition is skewed to gly residues; that stretch reads GSGGPGVEGGHGP. A compositionally biased stretch (low complexity) spans 477–493; sequence SRGAAPSGAAPLPSAAS. Over residues 509–519 the composition is skewed to polar residues; the sequence is GQENPSPQSTR. Residues 539–549 show a composition bias toward gly residues; the sequence is GPGGRGQGGPG. The segment covering 550 to 592 has biased composition (low complexity); the sequence is TPLTSSAASASSSSASSSSAPTPAGAASSAAGAASSSASASSG. Positions 617-626 are enriched in basic residues; it reads GPRKCARKTR.

This sequence belongs to the simplexviruses ICp0 family. Interacts directly with human RCOR1/CoREST protein, leading to the disruption of the human BHC corepressor complex. Interacts with human CENPA, leading to its degradation. Interacts with human USP7; this interaction modulates ICP0 stability. Interacts with human CDC34. Interacts (when phosphorylated) with human RNF8 (via FHA domain). Interacts with human TRIM27. Interacts with human ZBP1. Interacts with host MORC3; this interaction promotes the degradation of host MORC3. In terms of processing, phosphorylated at Thr-67, leading to promote interaction with host RNF8. Phosphorylated by host CHEK2; leading to increased SUMO-targeted ubiquitin ligase activity of ICP0. Post-translationally, auto-ubiquitinated. Deubiquitinated by host USP7; leading to stabilize it.

It is found in the host cytoplasm. Its subcellular location is the host nucleus. The catalysed reaction is S-ubiquitinyl-[E2 ubiquitin-conjugating enzyme]-L-cysteine + [acceptor protein]-L-lysine = [E2 ubiquitin-conjugating enzyme]-L-cysteine + N(6)-ubiquitinyl-[acceptor protein]-L-lysine.. Functionally, SUMO-targeted ubiquitin ligase that plays an essential role in nuclear antiviral defense evasion triggered by dsDNA viruses. Acts during the initial stages of lytic infection and the reactivation of latent viral genome. Prevents the antiviral effect of nuclear bodies by degrading host PML, SP100 and MORC3. Prevents antiviral response to viral DNA induced by IFI16 by degrading it. Additionally, inhibits host IRF3 nuclear signaling to prevent interferon production by the infected cells. Interestingly, the E3 ubiquitin ligase activity associated with the RING finger domain does not seem to be directly required to inhibit the activation of IRF3 but instead plays a critical role in modulating the cellular localization of ICP0. Upon reactivation of latent genome, suppresses the silencing of viral DNA by dissociating either HDAC1 or HDAC2 from the HDAC-RCOR1-REST-KDM1A complex localized at the ND10 structures and causes their dispersal. Two cellular histone ubiquitin ligases RNF8 and RNF168 are also targeted by ICP0 for degradation, leading to a loss of ubiquitinated forms of H2A, a relief of transcriptional repression, and the activation of latent viral genomes. Enhances the localization of host CCND3 to ND10 bodies that serve as precursors of replication compartments to enable efficient viral replication. Like many RING-finger E3 ubiquitin ligases, ICP0 can induce its own ubiquitination, an activity that promotes its instability due to its targeting to the 26S proteasome for degradation. ICP0 restricts this process by recruiting the cellular ubiquitin-specific protease USP7 that cleaves the anchored ubiquitin chains from ICP0, thereby promoting its stabilization. The polypeptide is E3 ubiquitin-protein ligase ICP0 (ICP0) (Homo sapiens (Human)).